Reading from the N-terminus, the 147-residue chain is MRVVLLASAVLCLLAGQVLSICSPVDYTLYVEKPECDFCVAINTTICMGFCYSLDPNVVGPAVKRLVVQRGCTYQAVEYRTAELPGCPPHVDPRFSYPVALHCTCRACDPARDECTHRASADGDRCSKPLLLHMHAYPGQSNYIQTL.

The signal sequence occupies residues 1–20 (MRVVLLASAVLCLLAGQVLS). Disulfide bonds link C22-C72, C36-C87, C39-C126, C47-C103, C51-C105, and C108-C115. N43 carries N-linked (GlcNAc...) asparagine glycosylation.

Belongs to the glycoprotein hormones subunit beta family. Heterodimer of a common alpha chain and a unique beta chain which confers biological specificity to thyrotropin, lutropin, follitropin and gonadotropin.

The protein resides in the secreted. Functionally, indispensable for the control of thyroid structure and metabolism. May play some role in the biological processes of the immature fishes. The sequence is that of Thyrotropin subunit beta (tshb) from Anguilla anguilla (European freshwater eel).